A 266-amino-acid chain; its full sequence is Glucose 1-dehydrogenase (266 aa).

Position 15 to 39 (15 to 39) interacts with NADP(+); sequence LVTGASQGIGEATALRFAEEGAQVA. Position 149 (Ser-149) interacts with substrate. Tyr-162 (proton acceptor) is an active-site residue.

It belongs to the short-chain dehydrogenases/reductases (SDR) family. In terms of assembly, homotetramer or homooctamer.

It carries out the reaction D-glucose + NADP(+) = D-glucono-1,5-lactone + NADPH + H(+). Its function is as follows. Oxidizes both D-glucose and D-mannose, but is 15 times more catalytically efficient with mannose. Strictly dependent on NADP. The chain is Glucose 1-dehydrogenase from Gluconobacter oxydans (strain 621H) (Gluconobacter suboxydans).